A 152-amino-acid chain; its full sequence is FMN reductase (NADH) RutF (152 aa).

This sequence belongs to the non-flavoprotein flavin reductase family. RutF subfamily.

The catalysed reaction is FMNH2 + NAD(+) = FMN + NADH + 2 H(+). In terms of biological role, catalyzes the reduction of FMN to FMNH2 which is used to reduce pyrimidine by RutA via the Rut pathway. The protein is FMN reductase (NADH) RutF of Shigella sonnei (strain Ss046).